Here is a 262-residue protein sequence, read N- to C-terminus: Sulfur carrier protein FdhD (262 aa).

Catalysis depends on C107, which acts as the Cysteine persulfide intermediate.

The protein belongs to the FdhD family.

Its subcellular location is the cytoplasm. Required for formate dehydrogenase (FDH) activity. Acts as a sulfur carrier protein that transfers sulfur from IscS to the molybdenum cofactor prior to its insertion into FDH. The sequence is that of Sulfur carrier protein FdhD from Bacillus pumilus (strain SAFR-032).